A 252-amino-acid chain; its full sequence is Adenosylcobinamide-GDP ribazoletransferase (252 aa).

The next 7 membrane-spanning stretches (helical) occupy residues 35–55, 58–78, 113–133, 139–159, 170–190, 192–212, and 231–251; these read AMLPLIGLIVGCIQWVVFYIL, IFPANITAIFIILVGMVLIGG, FAVLALIFDILIKYSALSFII, YAIIITPIMSRCTLVFLFLIG, LFIENVSVKEFIISFIFMIVP, VLLIGYKYSVIIIVVSFIITL, and GANNEIVEMFTMLVFVALLYI.

This sequence belongs to the CobS family. The cofactor is Mg(2+).

It localises to the cell membrane. It carries out the reaction alpha-ribazole + adenosylcob(III)inamide-GDP = adenosylcob(III)alamin + GMP + H(+). The catalysed reaction is alpha-ribazole 5'-phosphate + adenosylcob(III)inamide-GDP = adenosylcob(III)alamin 5'-phosphate + GMP + H(+). It functions in the pathway cofactor biosynthesis; adenosylcobalamin biosynthesis; adenosylcobalamin from cob(II)yrinate a,c-diamide: step 7/7. Functionally, joins adenosylcobinamide-GDP and alpha-ribazole to generate adenosylcobalamin (Ado-cobalamin). Also synthesizes adenosylcobalamin 5'-phosphate from adenosylcobinamide-GDP and alpha-ribazole 5'-phosphate. In Clostridium tetani (strain Massachusetts / E88), this protein is Adenosylcobinamide-GDP ribazoletransferase.